The chain runs to 440 residues: Xaa-Pro dipeptidase (440 aa).

Residues Asp244, Asp255, His335, Glu380, and Glu419 each coordinate Mn(2+).

It belongs to the peptidase M24B family. Bacterial-type prolidase subfamily. Requires Mn(2+) as cofactor.

The catalysed reaction is Xaa-L-Pro dipeptide + H2O = an L-alpha-amino acid + L-proline. Its function is as follows. Splits dipeptides with a prolyl residue in the C-terminal position. In Shewanella halifaxensis (strain HAW-EB4), this protein is Xaa-Pro dipeptidase.